A 400-amino-acid polypeptide reads, in one-letter code: Elongation factor Tu (400 aa).

Residues Lys10–Gln208 form the tr-type G domain. The segment at Gly19–Ser26 is G1. Residue Gly19–Ser26 participates in GTP binding. Ser26 is a binding site for Mg(2+). The interval Gly60–Asn64 is G2. The segment at Asp81–Gly84 is G3. Residues Asp81 to His85 and Asn136 to Asp139 each bind GTP. The G4 stretch occupies residues Asn136–Asp139. Residues Ser174–Leu176 form a G5 region.

Belongs to the TRAFAC class translation factor GTPase superfamily. Classic translation factor GTPase family. EF-Tu/EF-1A subfamily. Monomer.

It localises to the cytoplasm. It carries out the reaction GTP + H2O = GDP + phosphate + H(+). Functionally, GTP hydrolase that promotes the GTP-dependent binding of aminoacyl-tRNA to the A-site of ribosomes during protein biosynthesis. The chain is Elongation factor Tu from Thermotoga maritima (strain ATCC 43589 / DSM 3109 / JCM 10099 / NBRC 100826 / MSB8).